The primary structure comprises 896 residues: DNA mismatch repair protein MutS (896 aa).

638–645 (GPNMSGKS) contributes to the ATP binding site.

It belongs to the DNA mismatch repair MutS family.

Functionally, this protein is involved in the repair of mismatches in DNA. It is possible that it carries out the mismatch recognition step. This protein has a weak ATPase activity. In Fusobacterium nucleatum subsp. nucleatum (strain ATCC 25586 / DSM 15643 / BCRC 10681 / CIP 101130 / JCM 8532 / KCTC 2640 / LMG 13131 / VPI 4355), this protein is DNA mismatch repair protein MutS.